We begin with the raw amino-acid sequence, 328 residues long: Phenylalanine--tRNA ligase alpha subunit (328 aa).

Glu-245 is a binding site for Mg(2+).

It belongs to the class-II aminoacyl-tRNA synthetase family. Phe-tRNA synthetase alpha subunit type 1 subfamily. In terms of assembly, tetramer of two alpha and two beta subunits. Mg(2+) is required as a cofactor.

The protein resides in the cytoplasm. It catalyses the reaction tRNA(Phe) + L-phenylalanine + ATP = L-phenylalanyl-tRNA(Phe) + AMP + diphosphate + H(+). The protein is Phenylalanine--tRNA ligase alpha subunit of Helicobacter pylori (strain Shi470).